A 396-amino-acid polypeptide reads, in one-letter code: Anhydro-N-acetylmuramic acid kinase (396 aa).

21 to 28 (GTSADGID) contributes to the ATP binding site.

This sequence belongs to the anhydro-N-acetylmuramic acid kinase family.

The enzyme catalyses 1,6-anhydro-N-acetyl-beta-muramate + ATP + H2O = N-acetyl-D-muramate 6-phosphate + ADP + H(+). It participates in amino-sugar metabolism; 1,6-anhydro-N-acetylmuramate degradation. The protein operates within cell wall biogenesis; peptidoglycan recycling. Functionally, catalyzes the specific phosphorylation of 1,6-anhydro-N-acetylmuramic acid (anhMurNAc) with the simultaneous cleavage of the 1,6-anhydro ring, generating MurNAc-6-P. Is required for the utilization of anhMurNAc either imported from the medium or derived from its own cell wall murein, and thus plays a role in cell wall recycling. The chain is Anhydro-N-acetylmuramic acid kinase from Caldanaerobacter subterraneus subsp. tengcongensis (strain DSM 15242 / JCM 11007 / NBRC 100824 / MB4) (Thermoanaerobacter tengcongensis).